A 98-amino-acid chain; its full sequence is Keratinocyte differentiation-associated protein (98 aa).

A signal peptide spans Met-1–Gly-22.

In terms of tissue distribution, ubiquitously expressed in stratified epithelium.

It is found in the secreted. May act as a soluble regulator of keratinocyte differentiation. May play an important role in embryonic skin morphogenesis. The protein is Keratinocyte differentiation-associated protein of Rattus norvegicus (Rat).